The following is a 296-amino-acid chain: L-isoleucine 3(1)-dioxygenase (296 aa).

Fe cation contacts are provided by histidine 176, aspartate 178, and histidine 267.

Belongs to the iron/ascorbate-dependent oxidoreductase family. L-ascorbate is required as a cofactor. The cofactor is Fe(2+).

It carries out the reaction L-isoleucine + 2-oxoglutarate + O2 = 3(1)-hydroxy-L-isoleucine + succinate + CO2. Functionally, catalyzes the hydroxylation of L-isoleucine at the C-4' position to form L-4'-hydroxyisoleucine (4'-HIL). Exhibits low activity with L-valine and L-methionine. This is L-isoleucine 3(1)-dioxygenase from Pantoea ananatis (strain AJ13355).